The primary structure comprises 215 residues: Protein Thf1 (215 aa).

Residues 188–209 (IELVQETIAAERRKKERRQAEQ) are a coiled coil.

The protein belongs to the THF1 family.

In terms of biological role, may be involved in photosynthetic membrane biogenesis. In Synechococcus sp. (strain CC9902), this protein is Protein Thf1.